The following is a 467-amino-acid chain: Glycosyl hydrolase family 109 protein 1 (467 aa).

The first 22 residues, 1 to 22 (MKKLLLNTLIGLALLTCQTSFA), serve as a signal peptide directing secretion. NAD(+) contacts are provided by residues 66-67 (MR), Asp-88, 137-140 (WKHH), 157-158 (EV), and Asn-186. Residues Tyr-215, Arg-231, 243–246 (YATH), and Tyr-321 each bind substrate. Tyr-243 serves as a coordination point for NAD(+).

The protein belongs to the Gfo/Idh/MocA family. Glycosyl hydrolase 109 subfamily. NAD(+) serves as cofactor.

Its function is as follows. Glycosidase. This Bacteroides thetaiotaomicron (strain ATCC 29148 / DSM 2079 / JCM 5827 / CCUG 10774 / NCTC 10582 / VPI-5482 / E50) protein is Glycosyl hydrolase family 109 protein 1.